We begin with the raw amino-acid sequence, 492 residues long: N-succinylglutamate 5-semialdehyde dehydrogenase (492 aa).

220 to 225 (GRANTG) lines the NAD(+) pocket. Active-site residues include Glu-243 and Cys-277.

The protein belongs to the aldehyde dehydrogenase family. AstD subfamily.

It carries out the reaction N-succinyl-L-glutamate 5-semialdehyde + NAD(+) + H2O = N-succinyl-L-glutamate + NADH + 2 H(+). It participates in amino-acid degradation; L-arginine degradation via AST pathway; L-glutamate and succinate from L-arginine: step 4/5. Functionally, catalyzes the NAD-dependent reduction of succinylglutamate semialdehyde into succinylglutamate. In Shigella boydii serotype 18 (strain CDC 3083-94 / BS512), this protein is N-succinylglutamate 5-semialdehyde dehydrogenase.